Consider the following 213-residue polypeptide: Cytochrome b6 (213 aa).

Residues 30–50 (IFFCLGGLTLLCFIVQCLTGI) traverse the membrane as a helical segment. Position 33 (cysteine 33) interacts with heme c. Positions 84 and 98 each coordinate heme b. Helical transmembrane passes span 88 to 108 (CQLMILLVFLHMLRVYYTGAF), 114 to 134 (LNWVAGCFLLVLSLALAFTGY), and 184 to 204 (LHVMILPAVAIIFLVAHFIMI). The heme b site is built by histidine 185 and histidine 200.

Belongs to the cytochrome b family. PetB subfamily. As to quaternary structure, the subunits of the cytochrome bc complex are a Rieske Fe-S protein (PetC), cytochrome b6 (PetB), subunit IV (PetD), and a diheme cytochrome c (PetX). The cofactor is heme b. It depends on heme c as a cofactor.

It is found in the cell membrane. Component of the cytochrome bc complex which donates electrons to the photosynthetic reaction center. The polypeptide is Cytochrome b6 (Heliomicrobium gestii (Heliobacterium gestii)).